The following is a 231-amino-acid chain: Cytidylate kinase (231 aa).

Residue glycine 16–threonine 24 participates in ATP binding. Residues proline 176 to glutamate 205 are disordered. The span at glutamate 184–glutamate 205 shows a compositional bias: basic and acidic residues.

This sequence belongs to the cytidylate kinase family. Type 1 subfamily.

The protein localises to the cytoplasm. It catalyses the reaction CMP + ATP = CDP + ADP. The catalysed reaction is dCMP + ATP = dCDP + ADP. In Pelodictyon phaeoclathratiforme (strain DSM 5477 / BU-1), this protein is Cytidylate kinase.